Here is a 130-residue protein sequence, read N- to C-terminus: Putative antitoxin VapB50 (130 aa).

Functionally, possibly the antitoxin component of a type II toxin-antitoxin (TA) system. Its cognate toxin is VapC50. The polypeptide is Putative antitoxin VapB50 (Mycobacterium tuberculosis (strain ATCC 25618 / H37Rv)).